The following is an 81-amino-acid chain: MAIKKNNFEEQLNELQEIVNKLESGNVPLEDALSEFQAGVKLSRELEKKLNDAEQTVAKLVDKDGNEKALDPQNASAPEEE.

Residues 60–70 (LVDKDGNEKAL) show a composition bias toward basic and acidic residues. The segment at 60–81 (LVDKDGNEKALDPQNASAPEEE) is disordered.

Belongs to the XseB family. Heterooligomer composed of large and small subunits.

The protein resides in the cytoplasm. The enzyme catalyses Exonucleolytic cleavage in either 5'- to 3'- or 3'- to 5'-direction to yield nucleoside 5'-phosphates.. Functionally, bidirectionally degrades single-stranded DNA into large acid-insoluble oligonucleotides, which are then degraded further into small acid-soluble oligonucleotides. The sequence is that of Exodeoxyribonuclease 7 small subunit from Lactobacillus johnsonii (strain CNCM I-12250 / La1 / NCC 533).